We begin with the raw amino-acid sequence, 567 residues long: MRPAAGEAGAGLRWLGLAALLAALLGTPCAAAHHEDKAISVPDHGFCQPISIPLCTDIAYNQTILPNLLGHTNQEDAGLEVHQFYPLVKVQCSAELKFFLCSMYAPVCTVLEQAIPPCRSLCERARQGCEALMNKFGFQWPERLRCENFPVHGAGEICVGQNTSDAPPGPGGAGGRGATAQPTAGYLPDLLTPPQPAAGFSFSCPRQLKVPPYLGYRFLGERDCGAPCEPGRPNGLMYFKEAEVRFARLWVGVWSVLCCASTLFTVLTYLVDMRRFSYPERPIIFLSGCYFMVAVAYAAGFLLEERVVCLERFSEDGYRTVAQGTKKEGCTILFMILYFFGMASSIWWVILSLTWFLAAGMKWGHEAIEANSQYFHLAAWAVPAVKTITILAMGQVDGDVLSGVCYVGIYSVDSLRGFVLAPLFVYLFIGTSFLLAGFVSLFRIRTIMKHDGTKTEKLEKLMVRIGVFSVLYTVPATIVVACYFYEQAFRSTWEKTWLLQTCKTYAVPCPSHFAPMSPDFTVFMIKYLMTMIVGITTGFWIWSGKTLQSWRRFYHRLSTGSKGETAV.

An N-terminal signal peptide occupies residues 1 to 31; that stretch reads MRPAAGEAGAGLRWLGLAALLAALLGTPCAA. Residues 32–250 are Extracellular-facing; the sequence is AHHEDKAISV…EAEVRFARLW (219 aa). The region spanning 42-161 is the FZ domain; the sequence is PDHGFCQPIS…HGAGEICVGQ (120 aa). 5 cysteine pairs are disulfide-bonded: cysteine 47-cysteine 108, cysteine 55-cysteine 101, cysteine 92-cysteine 129, cysteine 118-cysteine 158, and cysteine 122-cysteine 146. An N-linked (GlcNAc...) asparagine glycan is attached at asparagine 61. A glycan (N-linked (GlcNAc...) asparagine) is linked at asparagine 162. A helical transmembrane segment spans residues 251–271; that stretch reads VGVWSVLCCASTLFTVLTYLV. Residues 272-282 are Cytoplasmic-facing; it reads DMRRFSYPERP. A helical transmembrane segment spans residues 283–303; it reads IIFLSGCYFMVAVAYAAGFLL. Topologically, residues 304–330 are extracellular; that stretch reads EERVVCLERFSEDGYRTVAQGTKKEGC. Residues 331–351 traverse the membrane as a helical segment; the sequence is TILFMILYFFGMASSIWWVIL. Over 352–373 the chain is Cytoplasmic; that stretch reads SLTWFLAAGMKWGHEAIEANSQ. Residues 374–394 form a helical membrane-spanning segment; the sequence is YFHLAAWAVPAVKTITILAMG. The Extracellular segment spans residues 395–417; that stretch reads QVDGDVLSGVCYVGIYSVDSLRG. Residues 418–438 form a helical membrane-spanning segment; sequence FVLAPLFVYLFIGTSFLLAGF. At 439–464 the chain is on the cytoplasmic side; it reads VSLFRIRTIMKHDGTKTEKLEKLMVR. A helical membrane pass occupies residues 465–485; it reads IGVFSVLYTVPATIVVACYFY. The Extracellular segment spans residues 486 to 521; sequence EQAFRSTWEKTWLLQTCKTYAVPCPSHFAPMSPDFT. The chain crosses the membrane as a helical span at residues 522-542; sequence VFMIKYLMTMIVGITTGFWIW. Residues 543 to 567 are Cytoplasmic-facing; sequence SGKTLQSWRRFYHRLSTGSKGETAV. Positions 545 to 550 match the Lys-Thr-X-X-X-Trp motif, mediates interaction with the PDZ domain of Dvl family members motif; it reads KTLQSW. The PDZ-binding motif lies at 565–567; that stretch reads TAV.

This sequence belongs to the G-protein coupled receptor Fz/Smo family. As to expression, expressed broadly in cranial ectoderm. Also expressed in the developing somites and in other cranial placodes, including the olfactory, lens, otic placodes (lateral half of the vesicle) and epibranchial placodes. Low level of expression in all the mesoderm derivatives in the limb buds.

Its subcellular location is the cell membrane. The protein resides in the endosome membrane. In terms of biological role, receptor for Wnt proteins. Most of frizzled receptors are coupled to the beta-catenin canonical signaling pathway, which leads to the activation of disheveled proteins, inhibition of GSK-3 kinase, nuclear accumulation of beta-catenin and activation of Wnt target genes. A second signaling pathway involving PKC and calcium fluxes has been seen for some family members, but it is not yet clear if it represents a distinct pathway or if it can be integrated in the canonical pathway, as PKC seems to be required for Wnt-mediated inactivation of GSK-3 kinase. Both pathways seem to involve interactions with G-proteins. May be involved in transduction and intercellular transmission of polarity information during tissue morphogenesis and/or in differentiated tissues. The polypeptide is Frizzled-7 (FZD7) (Gallus gallus (Chicken)).